Consider the following 207-residue polypeptide: Outer-membrane lipoprotein LolB (207 aa).

Positions 1–26 (MSKLKIDTKRRFSLLIALVLIISLSS) are cleaved as a signal peptide. Cys27 carries N-palmitoyl cysteine lipidation. Cys27 carries the S-diacylglycerol cysteine lipid modification.

It belongs to the LolB family. As to quaternary structure, monomer.

The protein localises to the cell outer membrane. Functionally, plays a critical role in the incorporation of lipoproteins in the outer membrane after they are released by the LolA protein. This chain is Outer-membrane lipoprotein LolB, found in Francisella tularensis subsp. tularensis (strain WY96-3418).